Here is an 84-residue protein sequence, read N- to C-terminus: uncharacterized protein (84 aa).

A helical membrane pass occupies residues alanine 10–histidine 32.

The protein localises to the membrane. This is an uncharacterized protein from Saccharomyces cerevisiae (strain ATCC 204508 / S288c) (Baker's yeast).